The primary structure comprises 126 residues: Large ribosomal subunit protein bL12 (126 aa).

The protein belongs to the bacterial ribosomal protein bL12 family. As to quaternary structure, homodimer. Part of the ribosomal stalk of the 50S ribosomal subunit. Forms a multimeric L10(L12)X complex, where L10 forms an elongated spine to which 2 to 4 L12 dimers bind in a sequential fashion. Binds GTP-bound translation factors.

Its function is as follows. Forms part of the ribosomal stalk which helps the ribosome interact with GTP-bound translation factors. Is thus essential for accurate translation. This is Large ribosomal subunit protein bL12 from Desulfatibacillum aliphaticivorans.